Here is a 690-residue protein sequence, read N- to C-terminus: Adhesion G protein-coupled receptor L4 (690 aa).

The first 19 residues, 1 to 19 (MKRLPLLVVFSTLLNCSYT), serve as a signal peptide directing secretion. The EGF-like 1 domain occupies 20–57 (QNCTKTPCLPNAKCEIRNGIEACYCNMGFSGNGVTICE). Over 20 to 432 (QNCTKTPCLP…DYNILTRITQ (413 aa)) the chain is Extracellular. Asn21 carries N-linked (GlcNAc...) asparagine glycosylation. Disulfide bonds link Cys22–Cys33, Cys27–Cys42, Cys44–Cys56, Cys62–Cys75, Cys69–Cys84, and Cys86–Cys107. The 51-residue stretch at 58-108 (DDNECGNLTQSCGENANCTNTEGSYYCMCVPGFRSSSNQDRFITNDGTVCI) folds into the EGF-like 2; calcium-binding domain. Asn64 and Asn74 each carry an N-linked (GlcNAc...) asparagine glycan. N-linked (GlcNAc...) asparagine glycans are attached at residues Asn127, Asn177, Asn188, Asn249, Asn381, and Asn395. The GAIN-B domain maps to 244 to 419 (TEFDTNSTDI…AILMSSGPSI (176 aa)). Cystine bridges form between Cys370/Cys401 and Cys389/Cys403. Residues 370 to 419 (CAFWNYSPDTMNGSWSSEGCELTYSNETHTSCRCNHLTHFAILMSSGPSI) are GPS. Residues 433–453 (LGIIISLICLAICIFTFWFFS) traverse the membrane as a helical segment. At 454–460 (EIQSTRT) the chain is on the cytoplasmic side. The helical transmembrane segment at 461 to 481 (TIHKNLCCSLFLAELVFLVGI) threads the bilayer. Residues 482 to 499 (NTNTNKLFCSIIAGLLHY) lie on the Extracellular side of the membrane. Residues 500 to 520 (FFLAAFAWMCIEGIHLYLIVV) traverse the membrane as a helical segment. Over 521–532 (GVIYNKGFLHKN) the chain is Cytoplasmic. Residues 533–553 (FYIFGYLSPAVVVGFSAALGY) form a helical membrane-spanning segment. The Extracellular portion of the chain corresponds to 554 to 573 (RYYGTTKVCWLSTENNFIWS). A helical transmembrane segment spans residues 574–594 (FIGPACLIILVNLLAFGVIIY). Residues 595–618 (KVFRHTAGLKPEVSCFENIRSCAR) lie on the Cytoplasmic side of the membrane. The chain crosses the membrane as a helical span at residues 619–639 (GALALLFLLGTTWIFGVLHVV). The Extracellular portion of the chain corresponds to 640–646 (HASVVTA). A helical transmembrane segment spans residues 647-667 (YLFTVSNAFQGMFIFLFLCVL). At 668 to 690 (SRKIQEEYYRLFKNVPCCFGCLR) the chain is on the cytoplasmic side.

Belongs to the G-protein coupled receptor 2 family. Adhesion G-protein coupled receptor (ADGR) subfamily. Heterodimer of 2 chains generated by proteolytic processing; the large extracellular N-terminal fragment and the membrane-bound C-terminal fragment predominantly remain associated and non-covalently linked. Post-translationally, glycosylated. Proteolytically cleaved into 2 subunits, an extracellular alpha subunit and a seven-transmembrane subunit. Detected in the majority of epithelial cells in tumor and normal tissues. Expressed also in human umbilical vein endothelial cells.

Its subcellular location is the cell membrane. In terms of biological role, endothelial orphan receptor that acts as a key regulator of angiogenesis. The chain is Adhesion G protein-coupled receptor L4 from Homo sapiens (Human).